An 893-amino-acid chain; its full sequence is Exocyst complex component 4 (893 aa).

The tract at residues 1–27 is disordered; sequence MNENGATPVAAARRHRPLPAERATSNS.

It belongs to the SEC8 family. The exocyst complex is composed of sec-3/exoc1, sec-5/exoc2, sec-6/exoc3, sec-8/exoc4, sec-10/exoc5, sec-15/exoc6, exo-70/exoc7 and exo-84/exoc8. As to expression, pseudocoelom.

Its function is as follows. Component of the exocyst complex involved in the docking of exocytic vesicles with fusion sites on the plasma membrane. The protein is Exocyst complex component 4 (sec-8) of Caenorhabditis elegans.